We begin with the raw amino-acid sequence, 611 residues long: 1,4-alpha-glucan branching enzyme GlgB (611 aa).

The Nucleophile role is filled by D302. The active-site Proton donor is E343.

It belongs to the glycosyl hydrolase 13 family. GlgB subfamily. Monomer.

It carries out the reaction Transfers a segment of a (1-&gt;4)-alpha-D-glucan chain to a primary hydroxy group in a similar glucan chain.. The protein operates within glycan biosynthesis; glycogen biosynthesis. In terms of biological role, catalyzes the formation of the alpha-1,6-glucosidic linkages in glycogen by scission of a 1,4-alpha-linked oligosaccharide from growing alpha-1,4-glucan chains and the subsequent attachment of the oligosaccharide to the alpha-1,6 position. In Fusobacterium nucleatum subsp. nucleatum (strain ATCC 25586 / DSM 15643 / BCRC 10681 / CIP 101130 / JCM 8532 / KCTC 2640 / LMG 13131 / VPI 4355), this protein is 1,4-alpha-glucan branching enzyme GlgB.